Reading from the N-terminus, the 269-residue chain is MVPKVLVMSGYGINCETETAHAFQKAGAETDIVHINDLIAGKKKMADYEIIMFPGGFSYGDDTGSGNAFANKIKNNLFDDLKEFINSGKLILGICNGFQVMTNLGLFALPSTDYGERISALEANTNNRYECRWVHVKENDSICVFTKGITITHVPIAHGEGRFYCDEKTYFELKENKQIVFSYCDSEGNSANQEYPLNPNGAYYDIAGICDKTGRIMGLMPHPERSLYSISEPEYQLKKEIAKRNREIIPEFIESNLQIFKNAVEYFNK.

Residues 5-262 enclose the Glutamine amidotransferase type-1 domain; it reads VLVMSGYGIN…IESNLQIFKN (258 aa). Cys95 (nucleophile) is an active-site residue. Active-site residues include His222, Glu224, and Glu232.

In terms of assembly, part of the FGAM synthase complex composed of 1 PurL, 1 PurQ and 2 PurS subunits.

Its subcellular location is the cytoplasm. It catalyses the reaction N(2)-formyl-N(1)-(5-phospho-beta-D-ribosyl)glycinamide + L-glutamine + ATP + H2O = 2-formamido-N(1)-(5-O-phospho-beta-D-ribosyl)acetamidine + L-glutamate + ADP + phosphate + H(+). The catalysed reaction is L-glutamine + H2O = L-glutamate + NH4(+). The protein operates within purine metabolism; IMP biosynthesis via de novo pathway; 5-amino-1-(5-phospho-D-ribosyl)imidazole from N(2)-formyl-N(1)-(5-phospho-D-ribosyl)glycinamide: step 1/2. Functionally, part of the phosphoribosylformylglycinamidine synthase complex involved in the purines biosynthetic pathway. Catalyzes the ATP-dependent conversion of formylglycinamide ribonucleotide (FGAR) and glutamine to yield formylglycinamidine ribonucleotide (FGAM) and glutamate. The FGAM synthase complex is composed of three subunits. PurQ produces an ammonia molecule by converting glutamine to glutamate. PurL transfers the ammonia molecule to FGAR to form FGAM in an ATP-dependent manner. PurS interacts with PurQ and PurL and is thought to assist in the transfer of the ammonia molecule from PurQ to PurL. This is Phosphoribosylformylglycinamidine synthase subunit PurQ from Methanococcus maripaludis (strain C5 / ATCC BAA-1333).